The sequence spans 126 residues: Large ribosomal subunit protein bL12 (126 aa).

It belongs to the bacterial ribosomal protein bL12 family. As to quaternary structure, homodimer. Part of the ribosomal stalk of the 50S ribosomal subunit. Forms a multimeric L10(L12)X complex, where L10 forms an elongated spine to which 2 to 4 L12 dimers bind in a sequential fashion. Binds GTP-bound translation factors.

In terms of biological role, forms part of the ribosomal stalk which helps the ribosome interact with GTP-bound translation factors. Is thus essential for accurate translation. This is Large ribosomal subunit protein bL12 from Acidovorax ebreus (strain TPSY) (Diaphorobacter sp. (strain TPSY)).